A 317-amino-acid chain; its full sequence is Transaldolase (317 aa).

Residue K132 is the Schiff-base intermediate with substrate of the active site.

It belongs to the transaldolase family. Type 1 subfamily. As to quaternary structure, homodimer.

It is found in the cytoplasm. The enzyme catalyses D-sedoheptulose 7-phosphate + D-glyceraldehyde 3-phosphate = D-erythrose 4-phosphate + beta-D-fructose 6-phosphate. It participates in carbohydrate degradation; pentose phosphate pathway; D-glyceraldehyde 3-phosphate and beta-D-fructose 6-phosphate from D-ribose 5-phosphate and D-xylulose 5-phosphate (non-oxidative stage): step 2/3. Its function is as follows. Transaldolase is important for the balance of metabolites in the pentose-phosphate pathway. This Haemophilus influenzae (strain PittEE) protein is Transaldolase.